Reading from the N-terminus, the 306-residue chain is Homeobox protein Hox-C13a (306 aa).

The homeobox DNA-binding region spans 236–295 (GRKKRVPYTKIQLKELEKEYAASKFITKDKRRRISATTNLSERQVTIWFQNRRVKEKKFV).

Belongs to the Abd-B homeobox family.

It localises to the nucleus. Functionally, sequence-specific transcription factor which is part of a developmental regulatory system that provides cells with specific positional identities on the anterior-posterior axis. This is Homeobox protein Hox-C13a (hoxc13a) from Danio rerio (Zebrafish).